The sequence spans 126 residues: Aspartate 1-decarboxylase (126 aa).

The active-site Schiff-base intermediate with substrate; via pyruvic acid is the Ser-25. Ser-25 is subject to Pyruvic acid (Ser). Thr-57 is a substrate binding site. Catalysis depends on Tyr-58, which acts as the Proton donor. 73–75 is a substrate binding site; that stretch reads GAA.

It belongs to the PanD family. In terms of assembly, heterooctamer of four alpha and four beta subunits. Pyruvate is required as a cofactor. Is synthesized initially as an inactive proenzyme, which is activated by self-cleavage at a specific serine bond to produce a beta-subunit with a hydroxyl group at its C-terminus and an alpha-subunit with a pyruvoyl group at its N-terminus.

It is found in the cytoplasm. It catalyses the reaction L-aspartate + H(+) = beta-alanine + CO2. The protein operates within cofactor biosynthesis; (R)-pantothenate biosynthesis; beta-alanine from L-aspartate: step 1/1. Its function is as follows. Catalyzes the pyruvoyl-dependent decarboxylation of aspartate to produce beta-alanine. This is Aspartate 1-decarboxylase from Erwinia tasmaniensis (strain DSM 17950 / CFBP 7177 / CIP 109463 / NCPPB 4357 / Et1/99).